A 599-amino-acid chain; its full sequence is MSELHNPDQSSRALFDLCRVLLKGIYGELSAVLVGSLLDYGRQTAAELAKTTKLPLSAVHSGLAALVQNRFVLYWANDRKSGRDTDDIGESSSIHYVANWKEIYQVVRAGGMVDAVRKDFGKGPGGKSNPESGERCAEIAQNLLVYGHMRVADYLEATPEHDRDSVEASIAVMLRKRFLVPVQAWQFKPETDLYARMFRDHLSKLPLSMAESARKNQAAVSAKTELERMQEERNSLNLGFVSGSVARTKGVPVLNRAEKLDHQAVLCANPDKFLVIARNEELAKLAEERCGKTAAEVYRQCLSKYVGRLHSCTQDTSPGAEFNITSMEIAKTIDPRLDGLRPRGKGSRSVSPRPQSKRVKTEEGYTKTGDYDEKEVDVEEDMEEELSGVALATAVSKQMQILAASPLKFVQSVGTKGGGEWYVNFKEATECLRGARYEQIIQWKYGRVAKRLLRAVKDKGKVDEKLLTNIALLPVKEILNHLHDLHSVGALDVQELPRTADRAASRTIFLWHHRANRAYSLISQDIYKSLSRCFERVAAERAKLPILLSKLQREDVKGHEDEFLTEQEKADLKGLRMREEKLLVQMNRLDGLIRVFRDY.

The interval 335–371 (PRLDGLRPRGKGSRSVSPRPQSKRVKTEEGYTKTGDY) is disordered. Residues 359-371 (VKTEEGYTKTGDY) are compositionally biased toward basic and acidic residues. Residues 526–547 (IYKSLSRCFERVAAERAKLPIL) form a leucine-zipper region.

Belongs to the RNA polymerase beta chain family. In terms of assembly, component of the RNA polymerase III (Pol III) complex consisting of 17 subunits.

It is found in the nucleus. In terms of biological role, DNA-dependent RNA polymerase catalyzes the transcription of DNA into RNA using the four ribonucleoside triphosphates as substrates. Specific core component of RNA polymerase III which synthesizes small RNAs, such as 5S rRNA and tRNAs. The protein is DNA-directed RNA polymerase III subunit RPC3 (RPC82) of Yarrowia lipolytica (strain CLIB 122 / E 150) (Yeast).